Here is a 1032-residue protein sequence, read N- to C-terminus: Kinesin heavy chain isoform 5A (1032 aa).

Ala-2 is modified (N-acetylalanine). Residues 9 to 327 form the Kinesin motor domain; the sequence is SIKVLCRFRP…LMFGQRAKTI (319 aa). An ATP-binding site is contributed by 86-93; sequence GQTSSGKT. The interval 174-315 is microtubule-binding; sequence VSSPEEILDV…PSSYNDAETK (142 aa). A necessary for interaction with ZFYVE27 region spans residues 271–361; that stretch reads EGTKSYVPYR…KTKAQKETIA (91 aa). The stretch at 331–906 forms a coiled coil; sequence ASVNLELTAE…VDRIKEAVRY (576 aa). An interaction with BICD2 region spans residues 353–1032; the sequence is TKAQKETIAK…FPLHQETAAS (680 aa). Phosphothreonine is present on Thr-397. 2 disordered regions span residues 906–939 and 978–1010; these read YKSS…YGTR and SGAT…RSDL. Positions 907–1032 are globular; the sequence is KSSGKRGHSA…FPLHQETAAS (126 aa). Low complexity predominate over residues 978 to 989; the sequence is SGATSSGGPLAS. Over residues 991-1003 the composition is skewed to polar residues; sequence QKANMDNGNATDI.

It belongs to the TRAFAC class myosin-kinesin ATPase superfamily. Kinesin family. Kinesin subfamily. As to quaternary structure, oligomer composed of two heavy chains and two light chains. Interacts with GRIP1. Interacts with FMR1 (via C-terminus); this interaction is increased in a mGluR-dependent manner. Interacts with ZFYVE27. Interacts with VAPA, VAPB, SURF4, RAB11A (GDP-bound form), RAB11B (GDP-bound form) and RTN3 in a ZFYVE27-dependent manner. Interacts with BORCS5. Interacts with BICD2. Interacts with DTNB. As to expression, distributed throughout the CNS but is highly enriched in subsets of neurons.

It is found in the cytoplasm. The protein resides in the perinuclear region. The protein localises to the cytoskeleton. Its subcellular location is the perikaryon. The enzyme catalyses ATP + H2O + a kinesin associated with a microtubule at position (n) = ADP + phosphate a kinesin associated with a microtubule at position (n+1, toward the plus end).. Functionally, microtubule-dependent motor required for slow axonal transport of neurofilament proteins (NFH, NFM and NFL). Can induce formation of neurite-like membrane protrusions in non-neuronal cells in a ZFYVE27-dependent manner. The ZFYVE27-KIF5A complex contributes to the vesicular transport of VAPA, VAPB, SURF4, RAB11A, RAB11B and RTN3 proteins in neurons. Required for anterograde axonal transportation of MAPK8IP3/JIP3 which is essential for MAPK8IP3/JIP3 function in axon elongation. This chain is Kinesin heavy chain isoform 5A, found in Homo sapiens (Human).